A 567-amino-acid chain; its full sequence is 2-succinyl-5-enolpyruvyl-6-hydroxy-3-cyclohexene-1-carboxylate synthase (567 aa).

It belongs to the TPP enzyme family. MenD subfamily. In terms of assembly, homodimer. Requires Mg(2+) as cofactor. Mn(2+) is required as a cofactor. Thiamine diphosphate serves as cofactor.

The catalysed reaction is isochorismate + 2-oxoglutarate + H(+) = 5-enolpyruvoyl-6-hydroxy-2-succinyl-cyclohex-3-ene-1-carboxylate + CO2. Its pathway is quinol/quinone metabolism; 1,4-dihydroxy-2-naphthoate biosynthesis; 1,4-dihydroxy-2-naphthoate from chorismate: step 2/7. The protein operates within quinol/quinone metabolism; menaquinone biosynthesis. Functionally, catalyzes the thiamine diphosphate-dependent decarboxylation of 2-oxoglutarate and the subsequent addition of the resulting succinic semialdehyde-thiamine pyrophosphate anion to isochorismate to yield 2-succinyl-5-enolpyruvyl-6-hydroxy-3-cyclohexene-1-carboxylate (SEPHCHC). The protein is 2-succinyl-5-enolpyruvyl-6-hydroxy-3-cyclohexene-1-carboxylate synthase of Shewanella loihica (strain ATCC BAA-1088 / PV-4).